The primary structure comprises 162 residues: MAYTNKVAVAVGAAVVFLAVVMNPRWTEAQTYPKLDRLCVMMIPDILEECFTHDRLKPTEDCCNDLKNATMTQVDCLCDNFLESLSFSDLSRTFSAGVLKKCDVSHKYMCQAAKNRGEAKGGRNSTTTCDNSITNTSVGGKNKVATSMSAFGLVAILLFVMF.

An N-terminal signal peptide occupies residues Met1–Ala29. Intrachain disulfides connect Cys39–Cys78, Cys50–Cys62, Cys63–Cys102, and Cys76–Cys110. A glycan (N-linked (GlcNAc...) asparagine) is linked at Asn68. 2 N-linked (GlcNAc...) asparagine glycosylation sites follow: Asn124 and Asn135. The GPI-anchor amidated serine moiety is linked to residue Ser137. Residues Val138 to Phe162 constitute a propeptide, removed in mature form.

It belongs to the plant LTP family.

The protein resides in the cell membrane. Probable lipid transfer protein. In Arabidopsis thaliana (Mouse-ear cress), this protein is Non-specific lipid transfer protein GPI-anchored 27.